The following is a 496-amino-acid chain: Glutamyl-tRNA(Gln) amidotransferase subunit A, mitochondrial (496 aa).

Catalysis depends on charge relay system residues Lys-80 and Ser-161. Ser-185 functions as the Acyl-ester intermediate in the catalytic mechanism.

Belongs to the amidase family. GatA subfamily. In terms of assembly, subunit of the heterotrimeric GatCAB amidotransferase (AdT) complex, composed of A, B and C subunits.

The protein localises to the mitochondrion. It carries out the reaction L-glutamyl-tRNA(Gln) + L-glutamine + ATP + H2O = L-glutaminyl-tRNA(Gln) + L-glutamate + ADP + phosphate + H(+). Its function is as follows. Allows the formation of correctly charged Gln-tRNA(Gln) through the transamidation of misacylated Glu-tRNA(Gln) in the mitochondria. The reaction takes place in the presence of glutamine and ATP through an activated gamma-phospho-Glu-tRNA(Gln). The polypeptide is Glutamyl-tRNA(Gln) amidotransferase subunit A, mitochondrial (Culex quinquefasciatus (Southern house mosquito)).